The primary structure comprises 258 residues: MPKFAANLTMMFNEVPFLDRFEAAAKAGFKYVEFLWPYDYPAQELKAILDKHGLKVVLFNTPAGDVNKGEWGGSAIPGREADSHRDIDLALEYALALGCPNVHIMSAVVPEGASREEYKQTFIKNVRYASDKYKPYGIKIQLEALSPEVKPNYLLKSQFDTLEVVELVDRDNVFVQLDYFHAQNVDGNLARLTDKLNGKFAHVQIASVPDRHEPDEGEINYQYIFDKLDEIGYTGYVGCEYKPRGETVTGLDWFQKYK.

The Proton donor/acceptor role is filled by glutamate 143. The Mg(2+) site is built by glutamate 143, aspartate 178, glutamine 204, and glutamate 240. Glutamate 240 functions as the Proton donor/acceptor in the catalytic mechanism.

Belongs to the hyi family. OtnI subfamily.

It carries out the reaction 2-dehydro-L-erythronate = 3-dehydro-L-erythronate. It catalyses the reaction 2-dehydro-D-erythronate = 3-dehydro-D-erythronate. Its function is as follows. Catalyzes the isomerization of 2-oxo-tetronate to 3-oxo-tetronate. The protein is 2-oxo-tetronate isomerase of Haemophilus influenzae (strain ATCC 51907 / DSM 11121 / KW20 / Rd).